An 83-amino-acid polypeptide reads, in one-letter code: Delta-conotoxin-like Ac6.2 (83 aa).

The first 22 residues, 1 to 22 (MKLTCVVIVAVLFLTAWTFVTA), serve as a signal peptide directing secretion. A propeptide spanning residues 23 to 51 (DDSRYGLKNLFPKARHEMKNPEASKLNKR) is cleaved from the precursor. 3 disulfide bridges follow: Cys54–Cys69, Cys61–Cys73, and Cys68–Cys78. Pro57 and Pro65 each carry 4-hydroxyproline.

This sequence belongs to the conotoxin O1 superfamily. In terms of tissue distribution, expressed by the venom duct.

Its subcellular location is the secreted. Functionally, delta-conotoxins bind to site 6 of voltage-gated sodium channels (Nav) and inhibit the inactivation process. This is Delta-conotoxin-like Ac6.2 from Conus achatinus (Little frog cone).